The primary structure comprises 369 residues: MTQKTILNDTHRALGAKMVDFGGWDMPIHYGSQLDEHHQVRRDAGMFDVSHMTVVDLHGARVREFLRYLLANSVDKLKVSGKALYTCMLNPQGGVIDDLIVYYMTEDFFRLVVNAATREKDLQWIGEQAARFDVRVEERSDFAMIAVQGPGARTKVIDLLDPADTAAASKLGRFAALQTRSRDGIDLFLARTGYTGEDGFEIVLPQEAAVAFWNALLAQGVKPAGLGARDTLRLEAGMNLYGQDMDDGVTPYEAGLAWTIALDEGRDFIGRSVLEYQKAQGAPRQLIGVVMDEKGVLRHGQTVLTASGEGEILSGTFSPTLGKAIAFARVPAGSIEQLRVDIRGKQVPLRAVKFPFVRDGQAQPGVLGD.

Belongs to the GcvT family. As to quaternary structure, the glycine cleavage system is composed of four proteins: P, T, L and H.

It carries out the reaction N(6)-[(R)-S(8)-aminomethyldihydrolipoyl]-L-lysyl-[protein] + (6S)-5,6,7,8-tetrahydrofolate = N(6)-[(R)-dihydrolipoyl]-L-lysyl-[protein] + (6R)-5,10-methylene-5,6,7,8-tetrahydrofolate + NH4(+). Functionally, the glycine cleavage system catalyzes the degradation of glycine. The sequence is that of Aminomethyltransferase from Xanthomonas euvesicatoria pv. vesicatoria (strain 85-10) (Xanthomonas campestris pv. vesicatoria).